Consider the following 452-residue polypeptide: Pup--protein ligase (452 aa).

A Mg(2+)-binding site is contributed by Glu-9. Residue Arg-53 participates in ATP binding. Position 55 (Tyr-55) interacts with Mg(2+). Residue Asp-57 is the Proton acceptor of the active site. Glu-63 contacts Mg(2+). 2 residues coordinate ATP: Thr-66 and Trp-419.

The protein belongs to the Pup ligase/Pup deamidase family. Pup-conjugating enzyme subfamily.

It carries out the reaction ATP + [prokaryotic ubiquitin-like protein]-L-glutamate + [protein]-L-lysine = ADP + phosphate + N(6)-([prokaryotic ubiquitin-like protein]-gamma-L-glutamyl)-[protein]-L-lysine.. It participates in protein degradation; proteasomal Pup-dependent pathway. Its pathway is protein modification; protein pupylation. Functionally, catalyzes the covalent attachment of the prokaryotic ubiquitin-like protein modifier Pup to the proteasomal substrate proteins, thereby targeting them for proteasomal degradation. This tagging system is termed pupylation. The ligation reaction involves the side-chain carboxylate of the C-terminal glutamate of Pup and the side-chain amino group of a substrate lysine. The polypeptide is Pup--protein ligase (Mycobacteroides abscessus (strain ATCC 19977 / DSM 44196 / CCUG 20993 / CIP 104536 / JCM 13569 / NCTC 13031 / TMC 1543 / L948) (Mycobacterium abscessus)).